A 717-amino-acid chain; its full sequence is ATP-dependent zinc metalloprotease FtsH (717 aa).

The Cytoplasmic segment spans residues 1–7 (MFKDKKM). A helical membrane pass occupies residues 8-28 (LKYIVIYSIIAFGILLTFNMV). Residues 29-109 (KDEMLYEKVD…VEFNVTKPEN (81 aa)) are Extracellular-facing. Residues 110 to 130 (YQLLGLLMSWVFPLILIFFVG) traverse the membrane as a helical segment. The Cytoplasmic segment spans residues 131-717 (RMMFSKMNNK…SSTNNKVDGE (587 aa)). 206–213 (GPPGTGKT) lines the ATP pocket. Residue His427 participates in Zn(2+) binding. The active site involves Glu428. Zn(2+) is bound by residues His431 and Asp504. Positions 670-717 (KLARANNEANNDALDSSKENEEVKSNVNDGATEEKKDDSSTNNKVDGE) are disordered. Basic and acidic residues-rich tracts occupy residues 684 to 693 (DSSKENEEVK) and 701 to 717 (TEEK…VDGE).

It in the central section; belongs to the AAA ATPase family. This sequence in the C-terminal section; belongs to the peptidase M41 family. Homohexamer. Requires Zn(2+) as cofactor.

Its subcellular location is the cell membrane. In terms of biological role, acts as a processive, ATP-dependent zinc metallopeptidase for both cytoplasmic and membrane proteins. Plays a role in the quality control of integral membrane proteins. This Clostridium perfringens (strain ATCC 13124 / DSM 756 / JCM 1290 / NCIMB 6125 / NCTC 8237 / Type A) protein is ATP-dependent zinc metalloprotease FtsH.